The sequence spans 293 residues: Sphingolipid C4-hydroxylase sur2 (293 aa).

3 consecutive transmembrane segments (helical) span residues 18–38 (LVSP…LHYI), 68–88 (AVLF…MFEG), and 127–147 (FIVP…WQYF). A Fatty acid hydroxylase domain is found at 136-270 (FAFFIIDSWQ…FTFWDHVLGT (135 aa)).

It belongs to the sterol desaturase family.

It is found in the endoplasmic reticulum membrane. Its pathway is membrane lipid metabolism; sphingolipid biosynthesis. In terms of biological role, required for hydroxylation of C-4 in the sphingoid moiety of ceramide. Involved in the response to syringomycin. The polypeptide is Sphingolipid C4-hydroxylase sur2 (sur2) (Schizosaccharomyces pombe (strain 972 / ATCC 24843) (Fission yeast)).